The primary structure comprises 555 residues: Connector enhancer of kinase suppressor of ras 3 (555 aa).

Residues 7-72 (WSPKQVVDWT…LEAVDLLCAL (66 aa)) form the SAM domain. One can recognise a CRIC domain in the interval 80–174 (NMKNLVLKLR…TTVQKDCFVA (95 aa)). A PDZ domain is found at 211-293 (EVHLPNIKPG…GVVLLLKKRP (83 aa)). 3 disordered regions span residues 309–334 (WKPPLVQTSPPPATTQSPESTMDTSL), 347–390 (PPPP…FLDQ), and 517–537 (IPFQEEGTKKKSGSSATKSSS). One can recognise a DUF1170 domain in the interval 325 to 546 (SPESTMDTSL…STEPSLLVSW (222 aa)). Residues Ser-381 and Ser-383 each carry the phosphoserine modification.

It belongs to the CNKSR family. As to quaternary structure, interacts with epithelial sodium channel ENaC. Interacts directly with SCNN1A (ENaC subunit alpha) and SCNN1B (ENaC subunit beta) C-terminal tails. Interacts with ENaC regulatory proteins NEDD4L, RAF1 and SGK1.

Its subcellular location is the cytoplasm. The protein localises to the apical cell membrane. Involved in transepithelial sodium transport. Regulates aldosterone-induced and epithelial sodium channel (ENaC)-mediated sodium transport through regulation of ENaC cell surface expression. Acts as a scaffold protein coordinating the assembly of an ENaC-regulatory complex (ERC). The protein is Connector enhancer of kinase suppressor of ras 3 (CNKSR3) of Homo sapiens (Human).